The sequence spans 118 residues: Ribosome-binding factor A (118 aa).

This sequence belongs to the RbfA family. As to quaternary structure, monomer. Binds 30S ribosomal subunits, but not 50S ribosomal subunits or 70S ribosomes.

Its subcellular location is the cytoplasm. Its function is as follows. One of several proteins that assist in the late maturation steps of the functional core of the 30S ribosomal subunit. Associates with free 30S ribosomal subunits (but not with 30S subunits that are part of 70S ribosomes or polysomes). Required for efficient processing of 16S rRNA. May interact with the 5'-terminal helix region of 16S rRNA. The protein is Ribosome-binding factor A of Latilactobacillus sakei subsp. sakei (strain 23K) (Lactobacillus sakei subsp. sakei).